Here is a 265-residue protein sequence, read N- to C-terminus: Nitrogenase iron protein 2 (265 aa).

ATP is bound at residue 8–15; that stretch reads GKGGIGKS. Cys-91 is a binding site for [4Fe-4S] cluster. Arg-94 bears the ADP-ribosylarginine; by dinitrogenase reductase ADP-ribosyltransferase mark. Residue Cys-126 coordinates [4Fe-4S] cluster.

The protein belongs to the NifH/BchL/ChlL family. As to quaternary structure, homodimer. [4Fe-4S] cluster is required as a cofactor. The reversible ADP-ribosylation of Arg-94 inactivates the nitrogenase reductase and regulates nitrogenase activity.

It carries out the reaction N2 + 8 reduced [2Fe-2S]-[ferredoxin] + 16 ATP + 16 H2O = H2 + 8 oxidized [2Fe-2S]-[ferredoxin] + 2 NH4(+) + 16 ADP + 16 phosphate + 6 H(+). The key enzymatic reactions in nitrogen fixation are catalyzed by the nitrogenase complex, which has 2 components: the iron protein and the molybdenum-iron protein. This is Nitrogenase iron protein 2 (nifH2) from Methanothermobacter thermautotrophicus (strain ATCC 29096 / DSM 1053 / JCM 10044 / NBRC 100330 / Delta H) (Methanobacterium thermoautotrophicum).